The sequence spans 490 residues: RNA-binding protein P (490 aa).

A disordered region spans residues 1 to 112 (MGKKRKLDSK…EEEEAAERDA (112 aa)). Residues 13–36 (AAARSAAARAAAAAAAAAAAAAVA) show a composition bias toward low complexity. Over residues 74–108 (GGEEEEVEEVEVEEEVEVDEDEDGEGEGEEEEEAA) the composition is skewed to acidic residues. 2 consecutive RRM domains span residues 156–233 (RKIF…LASV) and 267–343 (RKIF…QKAI).

As to quaternary structure, forms homodimers. Interacts with RBP-L and RBP-208. Interacts with NSF.

It localises to the nucleus. The protein localises to the cytoplasm. In terms of biological role, RNA-binding protein that binds to a cis-localization element or zipcode, within the 5'-CDS of prolamine RNA. Binds strongly to glutelin mRNA, particularly to 3'-UTR and zipcode RNA. Recognizes and binds to glutelin zipcode RNA, which is required for proper mRNA localization to cisternal endoplasmic reticulum. Exhibits strong binding activity to a glutelin intron sequence and may participate in mRNA splicing. Required for the correct localization of glutelin and prolamine mRNA in endosperm cells during grain development. RBP-P and RBP-L form a quaternary complex with the membrane trafficking factors NSF and RAB5A. This quaternay complex carries glutelin mRNAs for active transport on endosomes to the cortical endoplasmic reticulum membrane, and enables endosome-mediated glutelin mRNA transport in endosperm cells. This is RNA-binding protein P from Oryza sativa subsp. japonica (Rice).